The primary structure comprises 205 residues: Recombination protein RecR (205 aa).

The C4-type zinc-finger motif lies at 59-74; sequence CARCNTFCEGGLCDIC. A Toprim domain is found at 82-177; sequence RRLMVVHMPA…KVSRLSQGIP (96 aa).

It belongs to the RecR family.

May play a role in DNA repair. It seems to be involved in an RecBC-independent recombinational process of DNA repair. It may act with RecF and RecO. This chain is Recombination protein RecR, found in Neisseria meningitidis serogroup A / serotype 4A (strain DSM 15465 / Z2491).